The chain runs to 769 residues: Multiple C2 domain and transmembrane region protein 5 (769 aa).

3 C2 domains span residues 23–143 (SVTG…PQWY), 184–305 (PEGV…SRWF), and 345–467 (YSSD…THSY). Residues D56, D62, D109, D111, and D116 each coordinate Ca(2+). A run of 2 helical transmembrane segments spans residues 604–624 (IILVLYPELILPTVFLYLFLI) and 712–732 (LFVLFCLIAAIVLYVTPFQVV).

The protein belongs to the MCTP family. The cofactor is Ca(2+). As to expression, highly expressed in roots meristems and shoot apical meristems (SAMs). Observed in flowers.

It is found in the endoplasmic reticulum membrane. Functionally, may function as a signaling molecule by regulating the trafficking of other regulators. This Arabidopsis thaliana (Mouse-ear cress) protein is Multiple C2 domain and transmembrane region protein 5.